The primary structure comprises 349 residues: Protein O-mannose kinase (349 aa).

The Cytoplasmic segment spans residues 1–19; it reads MGQQHGARNGLTHRELPRG. Residues 20-42 traverse the membrane as a helical; Signal-anchor for type II membrane protein segment; it reads MGLLLAMALMNVVLYVCLDHLFI. Residues 43-349 are Lumenal-facing; sequence SPGRATEDPR…TVMSQTKEML (307 aa). 3 N-linked (GlcNAc...) asparagine glycosylation sites follow: asparagine 66, asparagine 164, and asparagine 219. Positions 80–349 constitute a Protein kinase domain; the sequence is VRQLKLVGEG…TVMSQTKEML (270 aa).

Belongs to the protein kinase superfamily. Ser/Thr protein kinase family. STKL subfamily.

The protein resides in the endoplasmic reticulum membrane. It carries out the reaction 3-O-[beta-D-GalNAc-(1-&gt;3)-beta-D-GlcNAc-(1-&gt;4)-alpha-D-Man]-L-Thr-[protein] + ATP = 3-O-[beta-D-GalNAc-(1-&gt;3)-beta-D-GlcNAc-(1-&gt;4)-(O-6-P-alpha-D-Man)]-Thr-[protein] + ADP + H(+). Protein O-mannose kinase that specifically mediates phosphorylation at the 6-position of an O-mannose of the trisaccharide (N-acetylgalactosamine (GalNAc)-beta-1,3-N-acetylglucosamine (GlcNAc)-beta-1,4-mannose) to generate phosphorylated O-mannosyl trisaccharide (N-acetylgalactosamine-beta-1,3-N-acetylglucosamine-beta-1,4-(phosphate-6-)mannose). Phosphorylated O-mannosyl trisaccharide is a carbohydrate structure present in alpha-dystroglycan (DAG1), which is required for binding laminin G-like domain-containing extracellular proteins with high affinity. Only shows kinase activity when the GalNAc-beta-3-GlcNAc-beta-terminus is linked to the 4-position of O-mannose, suggesting that this disaccharide serves as the substrate recognition motif. This is Protein O-mannose kinase (Pomk) from Rattus norvegicus (Rat).